The chain runs to 318 residues: Pantothenate kinase (318 aa).

Residue 96–103 participates in ATP binding; sequence GSVSVGKS.

This sequence belongs to the prokaryotic pantothenate kinase family.

It localises to the cytoplasm. It carries out the reaction (R)-pantothenate + ATP = (R)-4'-phosphopantothenate + ADP + H(+). It functions in the pathway cofactor biosynthesis; coenzyme A biosynthesis; CoA from (R)-pantothenate: step 1/5. In Bradyrhizobium sp. (strain ORS 278), this protein is Pantothenate kinase.